The primary structure comprises 508 residues: Photosystem II CP47 reaction center protein (508 aa).

6 helical membrane passes run 21–36 (SVHI…WAGS), 101–115 (IVFS…IWHW), 140–156 (GIHL…FGAF), 203–218 (IAAG…FHLS), 237–252 (VLSS…AFVV), and 457–472 (TFAL…HGAR).

The protein belongs to the PsbB/PsbC family. PsbB subfamily. PSII is composed of 1 copy each of membrane proteins PsbA, PsbB, PsbC, PsbD, PsbE, PsbF, PsbH, PsbI, PsbJ, PsbK, PsbL, PsbM, PsbT, PsbX, PsbY, PsbZ, Psb30/Ycf12, at least 3 peripheral proteins of the oxygen-evolving complex and a large number of cofactors. It forms dimeric complexes. Binds multiple chlorophylls. PSII binds additional chlorophylls, carotenoids and specific lipids. is required as a cofactor.

The protein localises to the plastid. Its subcellular location is the chloroplast thylakoid membrane. One of the components of the core complex of photosystem II (PSII). It binds chlorophyll and helps catalyze the primary light-induced photochemical processes of PSII. PSII is a light-driven water:plastoquinone oxidoreductase, using light energy to abstract electrons from H(2)O, generating O(2) and a proton gradient subsequently used for ATP formation. The polypeptide is Photosystem II CP47 reaction center protein (Oryza nivara (Indian wild rice)).